Here is a 430-residue protein sequence, read N- to C-terminus: MKSIYSLVLCTALTAASPHPAFPQSPLGVPTTSSPSTGTFNSAEEVINASPFLSFHRDIVQIESISSNEHNVGEFIADFLRARNFTVIEQAVTSSSQTENQERFNVFAYPSSNTPEILITSHIDTVPPFIPYSLDTDSTTDNDPSTIRISGRGSVDAKGSVAAQIFAALDVLEQNPSAPLGLLFVVGEETGGDGMRAFSESSLNPAPSAFHTVIFGEPTELALVSGHKGMLGFEIVAKGHAAHSGYPWLGRSAISAVLPALSRVDQLGNIPADKGGLPSSPKYGNTTVNIGRVDAGVAANVVPATARADVAVRLAAGTPDEARDIVRRAVRDATDGNPDVYAEFNTRSEGYPPQDLDTDVDGFDITTVNYGTDVPNLQIHEREDGPVRRYLYGPGSIHVAHGDNEAITVGDLQEAVRGYRKLIEAALQRR.

A signal peptide spans 1 to 16 (MKSIYSLVLCTALTAA). Asn84 is a glycosylation site (N-linked (GlcNAc...) asparagine). Asp156 contacts Zn(2+). Catalysis depends on Glu188, which acts as the Proton acceptor. Residue Glu189 coordinates Zn(2+). A glycan (N-linked (GlcNAc...) asparagine) is linked at Asn285.

This sequence belongs to the peptidase M20A family. It depends on Zn(2+) as a cofactor.

It is found in the secreted. In Aspergillus oryzae (strain ATCC 42149 / RIB 40) (Yellow koji mold), this protein is Probable carboxypeptidase AO090003000058.